A 209-amino-acid polypeptide reads, in one-letter code: Redox-sensing transcriptional repressor Rex (209 aa).

Residues 16 to 55 (LYYRFIQNLSLSGKQRVSSAELSEAVKVDSATIRRDFSYF) constitute a DNA-binding region (H-T-H motif). Position 90–95 (90–95 (GVGNLG)) interacts with NAD(+).

The protein belongs to the transcriptional regulatory Rex family. In terms of assembly, homodimer.

It is found in the cytoplasm. Its function is as follows. Modulates transcription in response to changes in cellular NADH/NAD(+) redox state. The protein is Redox-sensing transcriptional repressor Rex of Bacillus anthracis (strain A0248).